We begin with the raw amino-acid sequence, 386 residues long: Putative gustatory receptor 22b (386 aa).

The Cytoplasmic portion of the chain corresponds to 1–48; that stretch reads MFGSSREIRPYLARQMLKTTLYGSWLLGIFPFTLDSGKRIRQLRRSRC. The helical transmembrane segment at 49–69 threads the bilayer; sequence LTLYGLVLNYFLIFTLIRLAF. The Extracellular segment spans residues 70–89; that stretch reads EYRKHKLEAFKRNPVLEMIN. A helical transmembrane segment spans residues 90–110; it reads VVIGIINVLSALIVHFMNFWG. Topologically, residues 111-155 are cytoplasmic; sequence SRKVGEICNELLILEYQDFEGLNGRNCPNFNCFVIQKCLTILGQL. A helical transmembrane segment spans residues 156 to 176; it reads LSFFTLNFALPGLEFHICLVL. The Extracellular segment spans residues 177–178; that stretch reads LS. Residues 179-199 traverse the membrane as a helical segment; it reads CLMEFSLNLNIMHYHVGVLLI. Residues 200–254 are Cytoplasmic-facing; the sequence is YRYVWLINEQLKDLVSQLKLNPETDFSRIHQFLSLYKRLLELNRKLVIAYEYQMT. The helical transmembrane segment at 255 to 275 threads the bilayer; that stretch reads LFIIAQLSGNIVVIYFLIVYG. The Extracellular portion of the chain corresponds to 276-282; it reads LSMRTYS. Residues 283–303 traverse the membrane as a helical segment; that stretch reads IFLVAFPNSLLINIWDFWLCI. Over 304–363 the chain is Cytoplasmic; it reads AACDLTEKAGDETAIILKIFSDLEHRDDKLEMSVNEFAWLCSHRKFRFQLCGLFSMNCRM. Residues 364–384 form a helical membrane-spanning segment; the sequence is GFKMIITTFLYLVYLVQFDYM. Over 385–386 the chain is Extracellular; the sequence is NL.

This sequence belongs to the insect chemoreceptor superfamily. Gustatory receptor (GR) family. Gr22e subfamily. In terms of tissue distribution, expressed in taste bristles in the foreleg and labial palps. In larvae, is expressed in neurons of the dorsal and posterior pharyngeal sense organs. Expressed in taste neurons that mediate sensitivity to bitter compounds.

The protein resides in the cell membrane. Probable gustatory receptor which mediates acceptance or avoidance behavior, depending on its substrates. Seems to be involved in the sensing of bitter taste since it is expressed in neurons that mediate sensitivity to bitter compounds. The polypeptide is Putative gustatory receptor 22b (Drosophila melanogaster (Fruit fly)).